The following is a 299-amino-acid chain: Putative hydrolase YtaP (299 aa).

Belongs to the dienelactone hydrolase family.

This chain is Putative hydrolase YtaP (ytaP), found in Bacillus subtilis (strain 168).